We begin with the raw amino-acid sequence, 371 residues long: MAAPALRLCHIAFHVPAGQPLARNLQRLFGFQPLASREVDGWRQLALRSGDAVFLVNEGAGSGEPLYGLDPRHAVPSATNLCFDVADAGAATRELAALGCSVPVPPVRVRDAQGAATYAVVSSPAGILSLTLLERAGYRGPFLPGFRPVSSAPGPGWVSRVDHLTLACTPGSSPTLLRWFHDCLGFCHLPLSPGEDPELGLEMTAGFGLGGLRLTALQAQPGSIVPTLVLAESLPGATTRQDQVEQFLARHKGPGLQHVGLYTPNIVEATEGVATAGGQFLAPPGAYYQQPGKERQIRAAGHEPHLLARQGILLDGDKGKFLLQVFTKSLFTEDTFFLELIQRQGATGFGQGNIRALWQSVQEQSARSQEA.

VOC domains lie at 7–135 and 160–328; these read RLCH…LLER and RVDH…VFTK. Histidine 163, histidine 258, and glutamate 339 together coordinate Fe cation.

Belongs to the 4HPPD family. It depends on Fe cation as a cofactor.

It localises to the mitochondrion. It catalyses the reaction 3-(4-hydroxyphenyl)pyruvate + O2 = (S)-4-hydroxymandelate + CO2. Iron-dependent dioxygenase that catalyzes the conversion of 4-hydroxyphenylpyruvate (4-HPPA) to 4-hydroxymandelate (4-HMA) in the mitochondria, one of the steps in the biosynthesis of coenzyme Q10 from tyrosine. This chain is 4-hydroxyphenylpyruvate dioxygenase-like protein, found in Homo sapiens (Human).